The following is a 224-amino-acid chain: Deoxyribose-phosphate aldolase (224 aa).

The Proton donor/acceptor role is filled by Asp-91. Catalysis depends on Lys-152, which acts as the Schiff-base intermediate with acetaldehyde. Residue Lys-181 is the Proton donor/acceptor of the active site.

The protein belongs to the DeoC/FbaB aldolase family. DeoC type 1 subfamily.

The protein localises to the cytoplasm. The catalysed reaction is 2-deoxy-D-ribose 5-phosphate = D-glyceraldehyde 3-phosphate + acetaldehyde. Its pathway is carbohydrate degradation; 2-deoxy-D-ribose 1-phosphate degradation; D-glyceraldehyde 3-phosphate and acetaldehyde from 2-deoxy-alpha-D-ribose 1-phosphate: step 2/2. In terms of biological role, catalyzes a reversible aldol reaction between acetaldehyde and D-glyceraldehyde 3-phosphate to generate 2-deoxy-D-ribose 5-phosphate. This Mycoplasma pneumoniae (strain ATCC 29342 / M129 / Subtype 1) (Mycoplasmoides pneumoniae) protein is Deoxyribose-phosphate aldolase.